The chain runs to 464 residues: 3-isopropylmalate dehydratase large subunit (464 aa).

The [4Fe-4S] cluster site is built by C337, C397, and C400.

This sequence belongs to the aconitase/IPM isomerase family. LeuC type 1 subfamily. Heterodimer of LeuC and LeuD. It depends on [4Fe-4S] cluster as a cofactor.

It carries out the reaction (2R,3S)-3-isopropylmalate = (2S)-2-isopropylmalate. It participates in amino-acid biosynthesis; L-leucine biosynthesis; L-leucine from 3-methyl-2-oxobutanoate: step 2/4. Its function is as follows. Catalyzes the isomerization between 2-isopropylmalate and 3-isopropylmalate, via the formation of 2-isopropylmaleate. This is 3-isopropylmalate dehydratase large subunit from Bacillus cereus (strain 03BB102).